The following is a 130-amino-acid chain: MSATQNYGTGRRKTATARVFLRPGTGNISINNRSLDVFFGRETARMVVRQPLELTESVEKFDIYVTVSGGGVSGQAGAIRHGITRALMEYDETLRGALRRAGYVTRDAREVERKKVGLRKARKRPQYSKR.

The protein belongs to the universal ribosomal protein uS9 family.

The sequence is that of Small ribosomal subunit protein uS9 from Pseudomonas putida (strain ATCC 700007 / DSM 6899 / JCM 31910 / BCRC 17059 / LMG 24140 / F1).